The sequence spans 218 residues: Copper acquisition factor BIM1 (218 aa).

The N-terminal stretch at 1 to 19 is a signal peptide; the sequence is MFALKFILITSFIASTALA. Cu(2+) is bound by residues His-20 and His-65. 2 cysteine pairs are disulfide-bonded: Cys-40-Cys-144 and Cys-110-Cys-161. Asn-87, Asn-91, and Asn-124 each carry an N-linked (GlcNAc...) asparagine glycan. Asp-138 lines the Cu(2+) pocket. Asn-158 and Asn-170 each carry an N-linked (GlcNAc...) asparagine glycan. The tract at residues 160-194 is disordered; the sequence is TCTDDASRTSNASSTSSGSATATSAAATSSSSGTS. Positions 167-194 are enriched in low complexity; the sequence is RTSNASSTSSGSATATSAAATSSSSGTS. Ser-190 carries GPI-anchor amidated serine lipidation. The propeptide at 191 to 218 is removed in mature form; it reads SGTSGAIKEVVGLGALSLALGIAGLIIL.

The protein belongs to the X325 family. Cu(2+) is required as a cofactor.

It localises to the cell membrane. In terms of biological role, lytic polysaccharide monooxygenase-like protein that has diverged to biological functions other than polysaccharide degradation since it does not perform oxidative cleavage of polysaccharides. Cell surface-bound protein that functions in the copper-accumulation pathway shared by the CUF1-dependent copper transporter CTR1. Involved in maintaining cell wall integrity during copper deficiency. Binds Cu(2+) with an estimated 1:1 stoichiometry and might serve as an extracellular copper ligand. FRE4 and FRE7 metalloreductases probably function together with CTR1 and BIM1 to liberate the Cu(2+) bound to the BIM1 copper-binding site for subsequent import of Cu(+) into the cell by CTR1, via the reduction of BIM1-bound Cu(2+) to Cu(+) to reduce binding affinity for BIM1 but increase affinity for CTR1. Facilitates copper acquisition in the brain of mammalian hosts and acts as a copper-dependent virulence trait in fungal meningitis. While BIM1 plays a critical role in cryptococcal meningitis, at least in part through its role in copper acquisition, it could play additional roles during copper limitation or as a means to invade and colonize host tissues in the brain, by compromising host carbohydrate integrity via its lytic polysaccharide monooxygenase (LPMO) activity, which has still to be determined. This chain is Copper acquisition factor BIM1, found in Cryptococcus neoformans var. neoformans serotype D (strain JEC21 / ATCC MYA-565) (Filobasidiella neoformans).